The chain runs to 598 residues: Aspartate--tRNA(Asp/Asn) ligase (598 aa).

An L-aspartate-binding site is contributed by glutamate 177. The tract at residues 201-204 (QLFK) is aspartate. Arginine 223 provides a ligand contact to L-aspartate. Residues 223 to 225 (RDE) and glutamine 232 each bind ATP. Position 456 (histidine 456) interacts with L-aspartate. Glutamate 493 serves as a coordination point for ATP. Arginine 500 is an L-aspartate binding site. ATP is bound at residue 545 to 548 (GLDR).

The protein belongs to the class-II aminoacyl-tRNA synthetase family. Type 1 subfamily. In terms of assembly, homodimer.

It localises to the cytoplasm. The catalysed reaction is tRNA(Asx) + L-aspartate + ATP = L-aspartyl-tRNA(Asx) + AMP + diphosphate. Aspartyl-tRNA synthetase with relaxed tRNA specificity since it is able to aspartylate not only its cognate tRNA(Asp) but also tRNA(Asn). Reaction proceeds in two steps: L-aspartate is first activated by ATP to form Asp-AMP and then transferred to the acceptor end of tRNA(Asp/Asn). This is Aspartate--tRNA(Asp/Asn) ligase from Prochlorococcus marinus (strain MIT 9301).